Here is a 67-residue protein sequence, read N- to C-terminus: DNA-directed RNA polymerase subunit omega (67 aa).

It belongs to the RNA polymerase subunit omega family. As to quaternary structure, the RNAP catalytic core consists of 2 alpha, 1 beta, 1 beta' and 1 omega subunit. When a sigma factor is associated with the core the holoenzyme is formed, which can initiate transcription.

It catalyses the reaction RNA(n) + a ribonucleoside 5'-triphosphate = RNA(n+1) + diphosphate. Functionally, promotes RNA polymerase assembly. Latches the N- and C-terminal regions of the beta' subunit thereby facilitating its interaction with the beta and alpha subunits. The chain is DNA-directed RNA polymerase subunit omega from Ralstonia nicotianae (strain ATCC BAA-1114 / GMI1000) (Ralstonia solanacearum).